The sequence spans 461 residues: Fumarate hydratase class II (461 aa).

Substrate-binding positions include 98-100 (SGT), 129-132 (HPND), 139-141 (SSN), and threonine 187. Residues 120-140 (SKKGGKSPVHPNDHVNKGQSS) form a disordered region. Histidine 188 acts as the Proton donor/acceptor in catalysis. Residue serine 318 is part of the active site. Substrate contacts are provided by residues serine 319 and 324–326 (KVN).

This sequence belongs to the class-II fumarase/aspartase family. Fumarase subfamily. As to quaternary structure, homotetramer.

It is found in the cytoplasm. It carries out the reaction (S)-malate = fumarate + H2O. It participates in carbohydrate metabolism; tricarboxylic acid cycle; (S)-malate from fumarate: step 1/1. Its function is as follows. Involved in the TCA cycle. Catalyzes the stereospecific interconversion of fumarate to L-malate. This Rickettsia felis (strain ATCC VR-1525 / URRWXCal2) (Rickettsia azadi) protein is Fumarate hydratase class II.